Reading from the N-terminus, the 580-residue chain is Probable RNA-binding protein CG14230 (580 aa).

An RRM domain is found at 4 to 81 (TRFFLADLPT…EKLRVSLAKE (78 aa)). A compositionally biased stretch (basic and acidic residues) spans 89–100 (REREENQRREQG). 2 disordered regions span residues 89–131 (RERE…EDEE) and 173–211 (QHRK…KSAI). A compositionally biased stretch (polar residues) spans 110–120 (PSSQLLVQSGQ). A Phosphoserine modification is found at Ser231. 2 stretches are compositionally biased toward acidic residues: residues 254-263 (ENDDDEEEEQ) and 298-313 (NEEE…EPEE). Disordered stretches follow at residues 254 to 316 (ENDD…ESER), 333 to 395 (SAND…SAVS), and 463 to 520 (PFSY…IPRN). Composition is skewed to basic and acidic residues over residues 348–358 (LRFDPAKEGHQ) and 365–377 (QPKE…EETS). Polar residues predominate over residues 386 to 395 (AGNSQASAVS). Ser468 is modified (phosphoserine). Thr475 bears the Phosphothreonine mark.

This is Probable RNA-binding protein CG14230 from Drosophila melanogaster (Fruit fly).